Here is a 382-residue protein sequence, read N- to C-terminus: Lipid-A-disaccharide synthase (382 aa).

It belongs to the LpxB family.

It carries out the reaction 2-N,3-O-bis[(3R)-3-hydroxytetradecanoyl]-alpha-D-glucosaminyl 1-phosphate + UDP-2-N,3-O-bis[(3R)-3-hydroxytetradecanoyl]-alpha-D-glucosamine = lipid A disaccharide (E. coli) + UDP + H(+). It catalyses the reaction a lipid X + a UDP-2-N,3-O-bis[(3R)-3-hydroxyacyl]-alpha-D-glucosamine = a lipid A disaccharide + UDP + H(+). It participates in glycolipid biosynthesis; lipid IV(A) biosynthesis; lipid IV(A) from (3R)-3-hydroxytetradecanoyl-[acyl-carrier-protein] and UDP-N-acetyl-alpha-D-glucosamine: step 5/6. Condensation of UDP-2,3-diacylglucosamine and 2,3-diacylglucosamine-1-phosphate to form lipid A disaccharide, a precursor of lipid A, a phosphorylated glycolipid that anchors the lipopolysaccharide to the outer membrane of the cell. The polypeptide is Lipid-A-disaccharide synthase (Enterobacter sp. (strain 638)).